Consider the following 256-residue polypeptide: Acidic leucine-rich nuclear phosphoprotein 32 family member E (256 aa).

LRR repeat units follow at residues 43 to 64 (ELEF…PTLS), 65 to 87 (KLRK…AERC), and 89 to 110 (NLTY…EALQ). Residues 123 to 161 (CEITNLEDYRDSIFDLLQQITYLDGFDQEDNEAPDSEDD) enclose the LRRCT domain. Residues 147-256 (GFDQEDNEAP…PEDEGEEEDD (110 aa)) form a disordered region. Composition is skewed to acidic residues over residues 148–205 (FDQE…EEEV) and 215–235 (IQDE…EEEA). A ZID domain region spans residues 204–256 (EVGLSYLMKEEIQDEDDDDDYVEEGGDEEEEAEGIRGEKRKRDPEDEGEEEDD). A compositionally biased stretch (basic and acidic residues) spans 236–247 (EGIRGEKRKRDP).

It belongs to the ANP32 family. Component of a SWR1-like complex. Interacts with H2A.Z/H2AZ1.

It localises to the cytoplasm. It is found in the nucleus. In terms of biological role, histone chaperone that specifically mediates the genome-wide removal of histone H2A.Z/H2AZ1 from the nucleosome: removes H2A.Z/H2AZ1 from its normal sites of deposition, especially from enhancer and insulator regions. Not involved in deposition of H2A.Z/H2AZ1 in the nucleosome. May stabilize the evicted H2A.Z/H2AZ1-H2B dimer, thus shifting the equilibrium towards dissociation and the off-chromatin state. Inhibits activity of protein phosphatase 2A (PP2A). Does not inhibit protein phosphatase 1. May play a role in cerebellar development and synaptogenesis. The polypeptide is Acidic leucine-rich nuclear phosphoprotein 32 family member E (ANP32E) (Gallus gallus (Chicken)).